The sequence spans 200 residues: Glycerol-3-phosphate acyltransferase (200 aa).

5 helical membrane-spanning segments follow: residues 2 to 22 (FNIP…AVIV), 51 to 71 (KAAV…VLLA), 84 to 104 (AIAA…FFGF), 114 to 134 (LGVL…IWLV), and 159 to 179 (FFMP…LVLF).

Belongs to the PlsY family. As to quaternary structure, probably interacts with PlsX.

Its subcellular location is the cell inner membrane. It catalyses the reaction an acyl phosphate + sn-glycerol 3-phosphate = a 1-acyl-sn-glycero-3-phosphate + phosphate. The protein operates within lipid metabolism; phospholipid metabolism. In terms of biological role, catalyzes the transfer of an acyl group from acyl-phosphate (acyl-PO(4)) to glycerol-3-phosphate (G3P) to form lysophosphatidic acid (LPA). This enzyme utilizes acyl-phosphate as fatty acyl donor, but not acyl-CoA or acyl-ACP. This is Glycerol-3-phosphate acyltransferase from Neisseria meningitidis serogroup C / serotype 2a (strain ATCC 700532 / DSM 15464 / FAM18).